The sequence spans 224 residues: MSGDASTSAQDQNVESNDVPAIPDVDAGTPIDPVVEETPTLDTEIDPANRLQQLEQELNSLKQEHEAVQSQYMRIAADFDNFRKRQARDQDDLRQQLVCSTLTEILPVVDNFERARQQLNPEGEEAQALHRSYQGLYKQLVDVLKQQGVARMEVVGQEFDPTLHEAVLREENQEHAEDIVCEELQRGYHRDGRVLRHAMVKVSMGPGPESSSDAASEQPQEGDA.

Polar residues-rich tracts occupy residues 1 to 16 and 209 to 224; these read MSGD…NVES and ESSS…EGDA. Disordered regions lie at residues 1–35 and 203–224; these read MSGD…DPVV and SMGP…EGDA.

This sequence belongs to the GrpE family. In terms of assembly, homodimer.

The protein resides in the cytoplasm. Participates actively in the response to hyperosmotic and heat shock by preventing the aggregation of stress-denatured proteins, in association with DnaK and GrpE. It is the nucleotide exchange factor for DnaK and may function as a thermosensor. Unfolded proteins bind initially to DnaJ; upon interaction with the DnaJ-bound protein, DnaK hydrolyzes its bound ATP, resulting in the formation of a stable complex. GrpE releases ADP from DnaK; ATP binding to DnaK triggers the release of the substrate protein, thus completing the reaction cycle. Several rounds of ATP-dependent interactions between DnaJ, DnaK and GrpE are required for fully efficient folding. The protein is Protein GrpE of Synechococcus sp. (strain CC9902).